Reading from the N-terminus, the 475-residue chain is UDP-glycosyltransferase 708A6 (475 aa).

UDP-alpha-D-glucose-binding positions include S286, 348-349 (WV), 366-374 (HCGWNSLTE), and 388-391 (FGDQ).

It belongs to the UDP-glycosyltransferase family. Expressed in radicles, hypocotyls and juvenile leaves. Expressed at low levels in roots.

Functionally, bifunctional glycosyltransferase that can produce both C- and O-glycosidated flavonoids. Converts 2-hydroxynaringenin to isovitexin. Converts eriodictyol to orientin and isoorientin. Converts naringenin and eriodictyol to naringenin 7-O-glucoside and eriodictyol 7-O-glucoside, respectively. This Zea mays (Maize) protein is UDP-glycosyltransferase 708A6.